We begin with the raw amino-acid sequence, 359 residues long: Peptide chain release factor 1 (359 aa).

Gln-236 carries the N5-methylglutamine modification.

Belongs to the prokaryotic/mitochondrial release factor family. Methylated by PrmC. Methylation increases the termination efficiency of RF1.

It is found in the cytoplasm. Its function is as follows. Peptide chain release factor 1 directs the termination of translation in response to the peptide chain termination codons UAG and UAA. The chain is Peptide chain release factor 1 (prfA) from Mycoplasma pneumoniae (strain ATCC 29342 / M129 / Subtype 1) (Mycoplasmoides pneumoniae).